The primary structure comprises 374 residues: MADNSKTRVVVGMSGGVDSSVTALLLKEQGYDVIGIFMKNWDDTDENGVCTATEDYKDVAKVADQIGIPYYSVNFEKEYWDRVFEYFLAEYRLGRTPNPDVMCNKEIKFKAFLDYAMQLGADYVATGHYAQVETDENGVVHMLRGIDNNKDQTYFLSQLSQAQLAKTMFPLGGMEKSEVRAIAERAGLATAKKKDSTGVCFIGEKNFKEFLSNYLPAKKGNMVTEDGEIKGQHDGLMYYTIGQRQGLGIGGGGKTQEPWFVIGKDLTTNTLYVGQGFHHEKLYATHLEASEVHFTVDTPMPKEFDCTAKFRYRQADIPVHVSLSEDGTKATVTFKEPARAVTPGQAVVFYDGMECLGGGLIDRAYQDEKELQYV.

ATP contacts are provided by residues G12 to S19 and M38. The interaction with target base in tRNA stretch occupies residues N98–D100. Catalysis depends on C103, which acts as the Nucleophile. C103 and C200 are joined by a disulfide. G127 contacts ATP. The interval K150–Q152 is interaction with tRNA. The Cysteine persulfide intermediate role is filled by C200. The interval R311–Y312 is interaction with tRNA.

The protein belongs to the MnmA/TRMU family.

The protein resides in the cytoplasm. The catalysed reaction is S-sulfanyl-L-cysteinyl-[protein] + uridine(34) in tRNA + AH2 + ATP = 2-thiouridine(34) in tRNA + L-cysteinyl-[protein] + A + AMP + diphosphate + H(+). In terms of biological role, catalyzes the 2-thiolation of uridine at the wobble position (U34) of tRNA, leading to the formation of s(2)U34. The protein is tRNA-specific 2-thiouridylase MnmA of Enterococcus faecalis (strain ATCC 700802 / V583).